We begin with the raw amino-acid sequence, 169 residues long: MQNTIRIVGIDPGLRRTGWGIIDTLGNSLRFVASGTVTSDGDMDLASRLCQLHDGLAEVVHTYKPDEAAVEQTFVNKDAVATLKLGQARGIAMLVPARAGLRVSEYAPNAVKKAVIGVGHGEKHQIHMMLKILMPKVEFKGDDAADALAIAICHAHNRGSNRMREALAG.

Active-site residues include D11, E71, and D143. 3 residues coordinate Mg(2+): D11, E71, and D143.

This sequence belongs to the RuvC family. In terms of assembly, homodimer which binds Holliday junction (HJ) DNA. The HJ becomes 2-fold symmetrical on binding to RuvC with unstacked arms; it has a different conformation from HJ DNA in complex with RuvA. In the full resolvosome a probable DNA-RuvA(4)-RuvB(12)-RuvC(2) complex forms which resolves the HJ. Mg(2+) serves as cofactor.

It is found in the cytoplasm. The enzyme catalyses Endonucleolytic cleavage at a junction such as a reciprocal single-stranded crossover between two homologous DNA duplexes (Holliday junction).. The RuvA-RuvB-RuvC complex processes Holliday junction (HJ) DNA during genetic recombination and DNA repair. Endonuclease that resolves HJ intermediates. Cleaves cruciform DNA by making single-stranded nicks across the HJ at symmetrical positions within the homologous arms, yielding a 5'-phosphate and a 3'-hydroxyl group; requires a central core of homology in the junction. The consensus cleavage sequence is 5'-(A/T)TT(C/G)-3'. Cleavage occurs on the 3'-side of the TT dinucleotide at the point of strand exchange. HJ branch migration catalyzed by RuvA-RuvB allows RuvC to scan DNA until it finds its consensus sequence, where it cleaves and resolves the cruciform DNA. This is Crossover junction endodeoxyribonuclease RuvC from Rhizobium leguminosarum bv. trifolii (strain WSM2304).